The primary structure comprises 372 residues: Queuine tRNA-ribosyltransferase (372 aa).

D92 serves as the catalytic Proton acceptor. Substrate is bound by residues 92 to 96 (DSGGY), D146, Q188, and G215. Residues 246–252 (GIGSLRE) form an RNA binding region. The Nucleophile role is filled by D265. An RNA binding; important for wobble base 34 recognition region spans residues 270-274 (TRLGR). C303, C305, C308, and H334 together coordinate Zn(2+).

Belongs to the queuine tRNA-ribosyltransferase family. As to quaternary structure, homodimer. Within each dimer, one monomer is responsible for RNA recognition and catalysis, while the other monomer binds to the replacement base PreQ1. Zn(2+) is required as a cofactor.

It carries out the reaction 7-aminomethyl-7-carbaguanine + guanosine(34) in tRNA = 7-aminomethyl-7-carbaguanosine(34) in tRNA + guanine. It functions in the pathway tRNA modification; tRNA-queuosine biosynthesis. Its function is as follows. Catalyzes the base-exchange of a guanine (G) residue with the queuine precursor 7-aminomethyl-7-deazaguanine (PreQ1) at position 34 (anticodon wobble position) in tRNAs with GU(N) anticodons (tRNA-Asp, -Asn, -His and -Tyr). Catalysis occurs through a double-displacement mechanism. The nucleophile active site attacks the C1' of nucleotide 34 to detach the guanine base from the RNA, forming a covalent enzyme-RNA intermediate. The proton acceptor active site deprotonates the incoming PreQ1, allowing a nucleophilic attack on the C1' of the ribose to form the product. After dissociation, two additional enzymatic reactions on the tRNA convert PreQ1 to queuine (Q), resulting in the hypermodified nucleoside queuosine (7-(((4,5-cis-dihydroxy-2-cyclopenten-1-yl)amino)methyl)-7-deazaguanosine). In Prochlorococcus marinus (strain MIT 9312), this protein is Queuine tRNA-ribosyltransferase.